The primary structure comprises 583 residues: Aspartate--tRNA ligase (583 aa).

Residue E174 participates in L-aspartate binding. Positions 198–201 (QITK) are aspartate. Residue R220 participates in L-aspartate binding. Residues 220–222 (RDE) and Q229 contribute to the ATP site. H443 is an L-aspartate binding site. E477 contacts ATP. Residue R484 participates in L-aspartate binding. An ATP-binding site is contributed by 529–532 (GLDR).

It belongs to the class-II aminoacyl-tRNA synthetase family. Type 1 subfamily. In terms of assembly, homodimer.

The protein localises to the cytoplasm. It carries out the reaction tRNA(Asp) + L-aspartate + ATP = L-aspartyl-tRNA(Asp) + AMP + diphosphate. In terms of biological role, catalyzes the attachment of L-aspartate to tRNA(Asp) in a two-step reaction: L-aspartate is first activated by ATP to form Asp-AMP and then transferred to the acceptor end of tRNA(Asp). This Streptococcus thermophilus (strain ATCC BAA-491 / LMD-9) protein is Aspartate--tRNA ligase.